Reading from the N-terminus, the 460-residue chain is Bifunctional beta-D-glucosidase/beta-D-fucosidase (460 aa).

E168 serves as the catalytic Proton donor. E362 functions as the Nucleophile in the catalytic mechanism.

It belongs to the glycosyl hydrolase 1 family. In terms of assembly, monomer.

The protein localises to the secreted. It carries out the reaction Hydrolysis of terminal, non-reducing beta-D-glucosyl residues with release of beta-D-glucose.. The catalysed reaction is Hydrolysis of terminal non-reducing beta-D-fucose residues in beta-D-fucosides.. Its activity is regulated as follows. Inhibited by Cu(2+), Ag(+) and Hg(+), but not by other cations such as Mg(2+), Ca(2+), Mn(2+) and Co(2+). Inhibited by 1-amino-1-deoxy-D-glucose and p-chloromercuribenzoic acid, but not by EDTA or dithiothreitol. Inhibited by the disaccharides sucrose, lactose and cellobiose. The monosaccharides D-fructose, D-mannose, D-xylose and D-glucose increase the beta-D-fucosidase activity, but not the beta-D-glucosidase activity. D-glucose inhibits the beta-D-glucosidase activity, but promotes the beta-D-fucosidase activity. D-fucose inhibits the beta-D-glucosidase activity and does not significantly affect the beta-D-fucosidase activity. Its function is as follows. Bifunctional beta-D-glucosidase/beta-D-fucosidase. Activity towards pNP-beta-D-fucoside is about 80-85% of the activity towards pNP-beta-D-glucoside. Also has slight activity (less than 10%) towards pNP-beta-D-galactoside, and very low activity (less than 1%) towards pNP-beta-D-xyloside. Hydrolyzes laminaribiose, sophorose, cellobiose and gentobiose. Not active against maltose, pNP-alpha-D-glucoside or pNP-beta-L-fucoside. The sequence is that of Bifunctional beta-D-glucosidase/beta-D-fucosidase from Bifidobacterium breve.